The chain runs to 159 residues: Small ribosomal subunit protein uS17 (159 aa).

This sequence belongs to the universal ribosomal protein uS17 family.

The chain is Small ribosomal subunit protein uS17 (RPS11) from Euphorbia esula (Leafy spurge).